The following is a 206-amino-acid chain: Elongation factor 1-beta (206 aa).

A2 is subject to N-acetylalanine. K13 participates in a covalent cross-link: Glycyl lysine isopeptide (Lys-Gly) (interchain with G-Cter in ubiquitin). A phosphoserine mark is found at S31 and S86.

Belongs to the EF-1-beta/EF-1-delta family. In terms of assembly, the eukaryotic elongation factor 1 complex (eEF1) is probably a heterohexamer. Two trimeric complexes, each composed of eEF1A (TEF1 or TEF2), eEF1Balpha (EFB1) and eEF1Bgamma (CAM1 or TEF4), are probably dimerized via the eF1Bgamma subunits. eEF1Balpha interacts directly with eEF1A. eEF1Balpha and eEF1Bgamma form the eEF1B subcomplex with the GEF activity. In terms of processing, S-thiolated in response to oxidative stress, probably inhibiting the protein and causing a reduction in protein synthesis.

It participates in protein biosynthesis; polypeptide chain elongation. Catalytic subunit of the guanine nucleotide exchange factor (GEF) (eEF1B subcomplex) of the eukaryotic elongation factor 1 complex (eEF1). Stimulates the exchange of GDP for GTP on elongation factor 1A (eEF1A), probably by displacing GDP from the nucleotide binding pocket in eEF1A. The 30-fold higher concentration of GTP compared to GDP in cells favors the formation of eEF1A-GTP, which rapidly forms a ternary complex with aminoacyl-tRNA that in turn displaces eEF1B from the complex. In Saccharomyces cerevisiae (strain ATCC 204508 / S288c) (Baker's yeast), this protein is Elongation factor 1-beta (EFB1).